We begin with the raw amino-acid sequence, 835 residues long: Leucine--tRNA ligase (835 aa).

Residues 36–46 carry the 'HIGH' region motif; the sequence is PYPSGKIHVGH. Residues 602–606 carry the 'KMSKS' region motif; it reads KMSKS. Lys605 provides a ligand contact to ATP.

Belongs to the class-I aminoacyl-tRNA synthetase family.

The protein resides in the cytoplasm. The catalysed reaction is tRNA(Leu) + L-leucine + ATP = L-leucyl-tRNA(Leu) + AMP + diphosphate. The polypeptide is Leucine--tRNA ligase (Rickettsia rickettsii (strain Iowa)).